A 167-amino-acid chain; its full sequence is Small ribosomal subunit protein uS5 (167 aa).

Positions L12–V75 constitute an S5 DRBM domain.

This sequence belongs to the universal ribosomal protein uS5 family. Part of the 30S ribosomal subunit. Contacts proteins S4 and S8.

Functionally, with S4 and S12 plays an important role in translational accuracy. Located at the back of the 30S subunit body where it stabilizes the conformation of the head with respect to the body. The sequence is that of Small ribosomal subunit protein uS5 from Halorhodospira halophila (strain DSM 244 / SL1) (Ectothiorhodospira halophila (strain DSM 244 / SL1)).